Consider the following 81-residue polypeptide: Small ribosomal subunit protein bS20 (81 aa).

The span at 1-11 shows a compositional bias: basic residues; sequence MPNIKSQKKRV. The interval 1 to 20 is disordered; that stretch reads MPNIKSQKKRVLTNEKSRAS.

Belongs to the bacterial ribosomal protein bS20 family.

Its function is as follows. Binds directly to 16S ribosomal RNA. The polypeptide is Small ribosomal subunit protein bS20 (Mesoplasma florum (strain ATCC 33453 / NBRC 100688 / NCTC 11704 / L1) (Acholeplasma florum)).